Here is a 677-residue protein sequence, read N- to C-terminus: Histidine ammonia-lyase (677 aa).

The segment at residues 269–271 (CSG) is a cross-link (5-imidazolinone (Cys-Gly)). Ser270 carries the post-translational modification 2,3-didehydroalanine (Ser).

The protein belongs to the PAL/histidase family. Post-translationally, contains an active site 4-methylidene-imidazol-5-one (MIO), which is formed autocatalytically by cyclization and dehydration of residues Cys-Ser-Gly.

The catalysed reaction is L-histidine = trans-urocanate + NH4(+). It functions in the pathway amino-acid degradation; L-histidine degradation into L-glutamate; N-formimidoyl-L-glutamate from L-histidine: step 1/3. This Caenorhabditis elegans protein is Histidine ammonia-lyase.